Here is a 771-residue protein sequence, read N- to C-terminus: Hyperosmolality-gated Ca2+ permeable channel 1.3 (771 aa).

Residues 7-27 (IGVAAAINILTAIIFLLAFAI) form a helical membrane-spanning segment. Phosphoserine is present on Ser54. 9 helical membrane passes run 101-121 (IYLIGLKIFVPIALLAWSILV), 158-178 (FWTHLVMAYAFTFWTCYVLMK), 375-395 (LIMHIAFFFLTFFFMIPIAFV), 427-447 (FLPGIVLKLFLIFLPSILMVM), 467-487 (YYIFNLINVFLGSVITGSAFE), 512-532 (ATFFITYIMVDGWAGIAGEIL), 584-604 (PVTPVLLPFIIIFFALAYLVF), 630-650 (IISALIIAQILLMGLLSTKGA), and 651-671 (AQSTPFLLFLPIITFFFHRYC). A disordered region spans residues 744-771 (VPTKRQSRINTPAVSHASRGSSRSPPSK). Positions 751–771 (RINTPAVSHASRGSSRSPPSK) are enriched in polar residues.

This sequence belongs to the CSC1 (TC 1.A.17) family. Phosphorylated at Ser-54 by BIK1 in response to pathogen-associated molecular pattern (PAMP) perception, promoting its activation. In terms of tissue distribution, preferentially expressed in guard cells.

It is found in the cell membrane. The catalysed reaction is Ca(2+)(in) = Ca(2+)(out). Its activity is regulated as follows. Activated following phosphorylation at Ser-54 by BIK1. In terms of biological role, calcium-permeable channel that plays a key role in plant stomatal immunity. In response to pathogen-associated molecular pattern (PAMP) perception, phosphorylated and activated by BIK1, triggering rapid influx of calcium ions across the plasma membrane, leading to stomatal closure. In Arabidopsis thaliana (Mouse-ear cress), this protein is Hyperosmolality-gated Ca2+ permeable channel 1.3.